The primary structure comprises 348 residues: MPFLWGLRQDKEACVGTNNQSYICDTGHCCGQSQCCNYYYELWWFWLVWTVVIILSCCCVCHHRRAKHRLQAQQRQHEINLIAYREAHNYSALPFYFRFLPNSLLPPYEEVVNRPPTPPPPYSAFQLQQQQQLLPPPPQGGPPGGSPPGADPPPQGSQGAQSSPLSGPSRSSTRPPSVADPQSPEVPTDREATKASGTESGSPMAGHGELDPGAFLDQDSECKEELLKDSRSERGGVSPDSEDKTPGRHRRFTGDSGIEVCVCNRGHHDDDLKEFNTLIDDALDGPLDFCDSCHVRPPVDEEEGLCLSSEGQAREHGHPHLPRPPACLLLNTINEQDSPNSQHSGSPS.

Residues 42–62 traverse the membrane as a helical segment; sequence LWWFWLVWTVVIILSCCCVCH. Disordered stretches follow at residues 111 to 253 and 306 to 348; these read VVNR…RRFT and CLSS…GSPS. The segment covering 134–155 has biased composition (pro residues); sequence LPPPPQGGPPGGSPPGADPPPQ. A compositionally biased stretch (low complexity) spans 156-177; that stretch reads GSQGAQSSPLSGPSRSSTRPPS. Phosphoserine is present on Ser177. Residues 220 to 234 show a composition bias toward basic and acidic residues; sequence SECKEELLKDSRSER. The segment covering 331–348 has biased composition (polar residues); the sequence is NTINEQDSPNSQHSGSPS.

It localises to the membrane. In Mus musculus (Mouse), this protein is WW domain binding protein 1-like (Wbp1l).